Consider the following 77-residue polypeptide: MVAYPEISWTRNGCTVAKYPEISWTRNGCTVSKYPEISWTRNGCTVSKYPEISWTRNGCTVSKYPEISWTRNGCTVA.

A propeptide spanning residues 1 to 3 (MVA) is cleaved from the precursor. C14 carries the S-farnesyl cysteine lipid modification. The propeptide occupies 15–18 (TVAK). C29 carries S-farnesyl cysteine lipidation. A propeptide spanning residues 30–33 (TVSK) is cleaved from the precursor. C44 carries S-farnesyl cysteine lipidation. The propeptide occupies 45 to 48 (TVSK). The S-farnesyl cysteine moiety is linked to residue C59. A propeptide spanning residues 60–63 (TVSK) is cleaved from the precursor. C74 carries the S-farnesyl cysteine lipid modification. A propeptide spanning residues 75 to 77 (TVA) is cleaved from the precursor.

Its subcellular location is the cell membrane. Its function is as follows. Rhodotorucin-A is a mating pheromone in cells of mating type A of Rhodosporidium toruloides. The sequence is that of Rhodotorucin-A peptides type 2 (RHA2) from Rhodotorula toruloides (Yeast).